Reading from the N-terminus, the 350-residue chain is Biotin synthase (350 aa).

One can recognise a Radical SAM core domain in the interval 38–256 (NYVQVSTLLS…IAIARIMMPQ (219 aa)). [4Fe-4S] cluster contacts are provided by Cys53, Cys57, and Cys60. The [2Fe-2S] cluster site is built by Cys97, Cys128, Cys188, and Arg260.

The protein belongs to the radical SAM superfamily. Biotin synthase family. Homodimer. Requires [4Fe-4S] cluster as cofactor. It depends on [2Fe-2S] cluster as a cofactor.

The catalysed reaction is (4R,5S)-dethiobiotin + (sulfur carrier)-SH + 2 reduced [2Fe-2S]-[ferredoxin] + 2 S-adenosyl-L-methionine = (sulfur carrier)-H + biotin + 2 5'-deoxyadenosine + 2 L-methionine + 2 oxidized [2Fe-2S]-[ferredoxin]. The protein operates within cofactor biosynthesis; biotin biosynthesis; biotin from 7,8-diaminononanoate: step 2/2. Catalyzes the conversion of dethiobiotin (DTB) to biotin by the insertion of a sulfur atom into dethiobiotin via a radical-based mechanism. This is Biotin synthase from Vibrio campbellii (strain ATCC BAA-1116).